Consider the following 62-residue polypeptide: Rubredoxin-2 (62 aa).

In terms of domain architecture, Rubredoxin-like spans 7-58 (MWRCQMVNCGYVYDPDRGDKRRKVPAGTKFEDLPEDWRCPVCGAGKKSFRRL). The Fe cation site is built by Cys-10, Cys-15, Cys-45, and Cys-48.

The protein belongs to the rubredoxin family. In terms of assembly, monomer. It depends on Fe(3+) as a cofactor.

In terms of biological role, rubredoxin is a small nonheme, iron protein lacking acid-labile sulfide. Its single Fe, chelated to 4 Cys, functions as an electron acceptor and may also stabilize the conformation of the molecule. The protein is Rubredoxin-2 (rd2) of Desulfovibrio desulfuricans (strain ATCC 27774 / DSM 6949 / MB).